Reading from the N-terminus, the 144-residue chain is Large ribosomal subunit protein uL15 (144 aa).

A disordered region spans residues Met-1–Ser-25.

Belongs to the universal ribosomal protein uL15 family. Part of the 50S ribosomal subunit.

Binds to the 23S rRNA. The sequence is that of Large ribosomal subunit protein uL15 from Methylococcus capsulatus (strain ATCC 33009 / NCIMB 11132 / Bath).